Reading from the N-terminus, the 264-residue chain is Thymidylate synthase (264 aa).

A dUMP-binding site is contributed by Arg-21. His-51 contacts (6R)-5,10-methylene-5,6,7,8-tetrahydrofolate. A dUMP-binding site is contributed by 126–127 (RR). Cys-146 acts as the Nucleophile in catalysis. DUMP-binding positions include 166–169 (RSAD), Asn-177, and 207–209 (HLY). (6R)-5,10-methylene-5,6,7,8-tetrahydrofolate is bound at residue Asp-169. Ala-263 provides a ligand contact to (6R)-5,10-methylene-5,6,7,8-tetrahydrofolate.

It belongs to the thymidylate synthase family. Bacterial-type ThyA subfamily. Homodimer.

Its subcellular location is the cytoplasm. The enzyme catalyses dUMP + (6R)-5,10-methylene-5,6,7,8-tetrahydrofolate = 7,8-dihydrofolate + dTMP. The protein operates within pyrimidine metabolism; dTTP biosynthesis. In terms of biological role, catalyzes the reductive methylation of 2'-deoxyuridine-5'-monophosphate (dUMP) to 2'-deoxythymidine-5'-monophosphate (dTMP) while utilizing 5,10-methylenetetrahydrofolate (mTHF) as the methyl donor and reductant in the reaction, yielding dihydrofolate (DHF) as a by-product. This enzymatic reaction provides an intracellular de novo source of dTMP, an essential precursor for DNA biosynthesis. The polypeptide is Thymidylate synthase (Stutzerimonas stutzeri (strain A1501) (Pseudomonas stutzeri)).